Reading from the N-terminus, the 205-residue chain is Holliday junction branch migration complex subunit RuvA (205 aa).

Residues 1 to 64 are domain I; that stretch reads MIGKLKGTID…EDQLKLFGFL (64 aa). Residues 65–143 are domain II; that stretch reads SALEREWFRL…AFSGEMAPSI (79 aa). Positions 144 to 153 are flexible linker; the sequence is GLKQELGEGV. Positions 153-205 are domain III; it reads VAAAPVADAVSALTNLGYSRDQAANAVAAALKNGGEGGDSAKLIRLGLKELSR.

It belongs to the RuvA family. In terms of assembly, homotetramer. Forms an RuvA(8)-RuvB(12)-Holliday junction (HJ) complex. HJ DNA is sandwiched between 2 RuvA tetramers; dsDNA enters through RuvA and exits via RuvB. An RuvB hexamer assembles on each DNA strand where it exits the tetramer. Each RuvB hexamer is contacted by two RuvA subunits (via domain III) on 2 adjacent RuvB subunits; this complex drives branch migration. In the full resolvosome a probable DNA-RuvA(4)-RuvB(12)-RuvC(2) complex forms which resolves the HJ.

The protein localises to the cytoplasm. In terms of biological role, the RuvA-RuvB-RuvC complex processes Holliday junction (HJ) DNA during genetic recombination and DNA repair, while the RuvA-RuvB complex plays an important role in the rescue of blocked DNA replication forks via replication fork reversal (RFR). RuvA specifically binds to HJ cruciform DNA, conferring on it an open structure. The RuvB hexamer acts as an ATP-dependent pump, pulling dsDNA into and through the RuvAB complex. HJ branch migration allows RuvC to scan DNA until it finds its consensus sequence, where it cleaves and resolves the cruciform DNA. This chain is Holliday junction branch migration complex subunit RuvA, found in Rhizobium meliloti (strain 1021) (Ensifer meliloti).